Reading from the N-terminus, the 119-residue chain is Small ribosomal subunit protein uS10 (119 aa).

Belongs to the universal ribosomal protein uS10 family. As to quaternary structure, component of the 40S small ribosomal subunit.

It localises to the cytoplasm. In terms of biological role, component of the small ribosomal subunit. The ribosome is a large ribonucleoprotein complex responsible for the synthesis of proteins in the cell. This Xenopus laevis (African clawed frog) protein is Small ribosomal subunit protein uS10 (rps20).